A 100-amino-acid chain; its full sequence is NADH-quinone oxidoreductase subunit K (100 aa).

A run of 3 helical transmembrane segments spans residues 2–22 (VPTT…MIGV), 29–49 (IMVF…LVAF), and 63–83 (FIVM…IVAI).

This sequence belongs to the complex I subunit 4L family. In terms of assembly, NDH-1 is composed of 15 different subunits. Subunits NuoA, H, J, K, L, M, N constitute the membrane sector of the complex.

It is found in the cell membrane. The catalysed reaction is a quinone + NADH + 5 H(+)(in) = a quinol + NAD(+) + 4 H(+)(out). Its function is as follows. NDH-1 shuttles electrons from NADH, via FMN and iron-sulfur (Fe-S) centers, to quinones in the respiratory chain. The immediate electron acceptor for the enzyme in this species is believed to be a menaquinone. Couples the redox reaction to proton translocation (for every two electrons transferred, four hydrogen ions are translocated across the cytoplasmic membrane), and thus conserves the redox energy in a proton gradient. This Deinococcus deserti (strain DSM 17065 / CIP 109153 / LMG 22923 / VCD115) protein is NADH-quinone oxidoreductase subunit K.